We begin with the raw amino-acid sequence, 434 residues long: Histidinol dehydrogenase (434 aa).

NAD(+) is bound by residues tyrosine 130, glutamine 188, and asparagine 211. Serine 237, glutamine 259, and histidine 262 together coordinate substrate. 2 residues coordinate Zn(2+): glutamine 259 and histidine 262. Active-site proton acceptor residues include glutamate 326 and histidine 327. Positions 327, 360, 414, and 419 each coordinate substrate. Aspartate 360 lines the Zn(2+) pocket. Histidine 419 provides a ligand contact to Zn(2+).

The protein belongs to the histidinol dehydrogenase family. As to quaternary structure, homodimer. Zn(2+) is required as a cofactor.

It carries out the reaction L-histidinol + 2 NAD(+) + H2O = L-histidine + 2 NADH + 3 H(+). It participates in amino-acid biosynthesis; L-histidine biosynthesis; L-histidine from 5-phospho-alpha-D-ribose 1-diphosphate: step 9/9. Functionally, catalyzes the sequential NAD-dependent oxidations of L-histidinol to L-histidinaldehyde and then to L-histidine. This Shigella sonnei (strain Ss046) protein is Histidinol dehydrogenase.